The primary structure comprises 317 residues: Acetyl-coenzyme A carboxylase carboxyl transferase subunit alpha (317 aa).

In terms of domain architecture, CoA carboxyltransferase C-terminal spans 37 to 292 (RLEKKAEKLR…RICLKKHLDD (256 aa)).

The protein belongs to the AccA family. As to quaternary structure, acetyl-CoA carboxylase is a heterohexamer composed of biotin carboxyl carrier protein (AccB), biotin carboxylase (AccC) and two subunits each of ACCase subunit alpha (AccA) and ACCase subunit beta (AccD).

The protein resides in the cytoplasm. It carries out the reaction N(6)-carboxybiotinyl-L-lysyl-[protein] + acetyl-CoA = N(6)-biotinyl-L-lysyl-[protein] + malonyl-CoA. It participates in lipid metabolism; malonyl-CoA biosynthesis; malonyl-CoA from acetyl-CoA: step 1/1. Its function is as follows. Component of the acetyl coenzyme A carboxylase (ACC) complex. First, biotin carboxylase catalyzes the carboxylation of biotin on its carrier protein (BCCP) and then the CO(2) group is transferred by the carboxyltransferase to acetyl-CoA to form malonyl-CoA. The polypeptide is Acetyl-coenzyme A carboxylase carboxyl transferase subunit alpha (Syntrophotalea carbinolica (strain DSM 2380 / NBRC 103641 / GraBd1) (Pelobacter carbinolicus)).